Here is a 505-residue protein sequence, read N- to C-terminus: Lysine--tRNA ligase (505 aa).

Residues Glu415 and Glu422 each contribute to the Mg(2+) site.

Belongs to the class-II aminoacyl-tRNA synthetase family. In terms of assembly, homodimer. Mg(2+) serves as cofactor.

It is found in the cytoplasm. It catalyses the reaction tRNA(Lys) + L-lysine + ATP = L-lysyl-tRNA(Lys) + AMP + diphosphate. The sequence is that of Lysine--tRNA ligase from Shigella flexneri.